The sequence spans 321 residues: uncharacterized protein (321 aa).

9 helical membrane passes run 12-32 (IGVE…WAAT), 52-72 (LITS…AFLV), 86-106 (ILMS…ILII), 109-129 (LTGL…QQWF), 136-156 (FVIS…LVLA), 168-188 (DSLS…LFVG), 214-234 (WGMI…FTFL), 254-274 (KEIP…GLFF), and 292-312 (IFIC…QIFA).

The protein localises to the cell membrane. This is an uncharacterized protein from Campylobacter jejuni subsp. jejuni serotype O:2 (strain ATCC 700819 / NCTC 11168).